The primary structure comprises 396 residues: Phosphoglycerate kinase (396 aa).

Substrate contacts are provided by residues 21 to 23, arginine 36, 59 to 62, arginine 118, and arginine 151; these read DLN and HFDR. Residues lysine 201, glutamate 323, and 353–356 each bind ATP; that span reads GGDT.

Belongs to the phosphoglycerate kinase family. Monomer.

The protein resides in the cytoplasm. The catalysed reaction is (2R)-3-phosphoglycerate + ATP = (2R)-3-phospho-glyceroyl phosphate + ADP. The protein operates within carbohydrate degradation; glycolysis; pyruvate from D-glyceraldehyde 3-phosphate: step 2/5. The polypeptide is Phosphoglycerate kinase (Granulibacter bethesdensis (strain ATCC BAA-1260 / CGDNIH1)).